Consider the following 509-residue polypeptide: Maturase K (509 aa).

It belongs to the intron maturase 2 family. MatK subfamily.

It is found in the plastid. The protein localises to the chloroplast. Its function is as follows. Usually encoded in the trnK tRNA gene intron. Probably assists in splicing its own and other chloroplast group II introns. The protein is Maturase K of Otacanthus azureus (Brazilian snapdragon).